The sequence spans 429 residues: Inner membrane transport protein RhmT (429 aa).

Over 1 to 16 (MSTALLDAVVKKNRVR) the chain is Cytoplasmic. Residues 17–37 (LIPFMLALYVLAFLDRSNIGF) form a helical membrane-spanning segment. The Periplasmic segment spans residues 38–54 (AKQTYQIDTGLSNEAYA). A helical membrane pass occupies residues 55–75 (LGAGIFFVVYAFLGVPANLLM). Residues 76 to 81 (RKLGAR) are Cytoplasmic-facing. The chain crosses the membrane as a helical span at residues 82–102 (TWIGTTTLLWGFLSAAMAWAD). At 103–143 (TEAKFLIVRTLLRAAEAGFFPGMIYLTSQWFPQRNRASIMG) the chain is on the periplasmic side. The chain crosses the membrane as a helical span at residues 144–164 (LFYMGAPLALTLGSPLSGALL). Topologically, residues 165-174 (EMHGFMGHPG) are cytoplasmic. Residues 175–195 (WFWMFVIEGLLAVGAGVFTFF) traverse the membrane as a helical segment. Residues 196 to 242 (WLDDTPEQARFLSKQEKTLLINQLASEEQQKVTSRLSDALRNGRVWQ) are Periplasmic-facing. The chain crosses the membrane as a helical span at residues 243 to 263 (LAIIYLTIQVAVYGLIFFLPT). Over 264 to 274 (QVAALLGTKVG) the chain is Cytoplasmic. The helical transmembrane segment at 275–295 (FTASVVTAIPWVAALFGTWLI) threads the bilayer. Over 296–324 (PRYSDKTGERRNVAALTLLAAGIGIGLSG) the chain is Periplasmic. A helical membrane pass occupies residues 325–345 (LLSPVMAIVALCVAAIGFIAV). Residues 346-361 (QPVFWTMPTQLLSGTA) lie on the Cytoplasmic side of the membrane. A helical membrane pass occupies residues 362–382 (LAAGIGFVNLFGAVGGFIAPI). Residues 383–394 (LRVKAETLFASD) are Periplasmic-facing. The helical transmembrane segment at 395-415 (AAGLLTLAAVAVIGSLIIFTL) threads the bilayer. At 416-429 (RVNRTVAQTDVAHH) the chain is on the cytoplasmic side.

It belongs to the major facilitator superfamily. Phthalate permease family.

It is found in the cell inner membrane. In Escherichia coli (strain K12), this protein is Inner membrane transport protein RhmT (rhmT).